We begin with the raw amino-acid sequence, 252 residues long: Deoxyuridine 5'-triphosphate nucleotidohydrolase, mitochondrial (252 aa).

A mitochondrion-targeting transit peptide spans 1–69; sequence MTPLCPRPAL…AGRLSQGCRG (69 aa). 3 positions are modified to phosphoserine: C11, S88, and S99. The segment at 78 to 104 is disordered; that stretch reads WKGELPKAGGSPAPGPETPAISPSKRA. DUTP-binding positions include 173–175, 187–193, G198, R241, and 246–247; these read RSG, GVIDEDY, and FG.

The protein belongs to the dUTPase family. In terms of assembly, homotrimer. Requires Mg(2+) as cofactor. In terms of processing, nuclear isoform 2 is phosphorylated in vivo on Ser-11, a reaction that can be catalyzed in vitro by CDC2. Phosphorylation in mature T-cells occurs in a cell cycle-dependent manner. Isoform 3 is not phosphorylated. Found in a variety of tissues. Isoform 3 expression is constitutive, while isoform 2 expression correlates with the onset of DNA replication (at protein level). Isoform 2 degradation coincides with the cessation of nuclear DNA replication (at protein level).

The protein resides in the nucleus. The protein localises to the mitochondrion. The enzyme catalyses dUTP + H2O = dUMP + diphosphate + H(+). It participates in pyrimidine metabolism; dUMP biosynthesis; dUMP from dCTP (dUTP route): step 2/2. Its activity is regulated as follows. Phosphorylation is necessary for activity. Its function is as follows. Catalyzes the cleavage of 2'-deoxyuridine 5'-triphosphate (dUTP) into 2'-deoxyuridine 5'-monophosphate (dUMP) and inorganic pyrophosphate and through its action efficiently prevents uracil misincorporation into DNA and at the same time provides dUMP, the substrate for de novo thymidylate biosynthesis. Inhibits peroxisome proliferator-activated receptor (PPAR) activity by binding of its N-terminal to PPAR, preventing the latter's dimerization with retinoid X receptor. Essential for embryonic development. The protein is Deoxyuridine 5'-triphosphate nucleotidohydrolase, mitochondrial (DUT) of Homo sapiens (Human).